The primary structure comprises 95 residues: UPF0213 protein YPK_3712 (95 aa).

Residues 4-79 enclose the GIY-YIG domain; that stretch reads SLWHLYLLRT…KQLSKQQKEK (76 aa).

The protein belongs to the UPF0213 family.

The protein is UPF0213 protein YPK_3712 of Yersinia pseudotuberculosis serotype O:3 (strain YPIII).